The chain runs to 475 residues: Ribosomal RNA small subunit methyltransferase F (475 aa).

S-adenosyl-L-methionine contacts are provided by residues alanine 125–lysine 131, glutamate 149, aspartate 176, and aspartate 194. Catalysis depends on cysteine 247, which acts as the Nucleophile.

Belongs to the class I-like SAM-binding methyltransferase superfamily. RsmB/NOP family.

The protein localises to the cytoplasm. It carries out the reaction cytidine(1407) in 16S rRNA + S-adenosyl-L-methionine = 5-methylcytidine(1407) in 16S rRNA + S-adenosyl-L-homocysteine + H(+). Functionally, specifically methylates the cytosine at position 1407 (m5C1407) of 16S rRNA. The polypeptide is Ribosomal RNA small subunit methyltransferase F (Aeromonas hydrophila subsp. hydrophila (strain ATCC 7966 / DSM 30187 / BCRC 13018 / CCUG 14551 / JCM 1027 / KCTC 2358 / NCIMB 9240 / NCTC 8049)).